The primary structure comprises 384 residues: Surfeit locus protein 1-like (384 aa).

3 consecutive transmembrane segments (helical) span residues 55 to 75, 302 to 322, and 338 to 358; these read ALLW…YKFL, IPLD…TCFI, and IGVE…TKIY.

Belongs to the SURF1 (TC 3.D.4.8) family.

It localises to the mitochondrion inner membrane. Its function is as follows. May be involved in the biogenesis of the COX complex. The sequence is that of Surfeit locus protein 1-like from Arabidopsis thaliana (Mouse-ear cress).